The primary structure comprises 97 residues: MKAVEFVENPYGIRLRIFLQPKASRDQIVGLHDNELKVAITAPPVDGAANAYLLKYLSKLFKVPKSSIVLEKGELQRHKQLFVPAPKLLPKEIEQWL.

It belongs to the UPF0235 family.

This Haemophilus ducreyi (strain 35000HP / ATCC 700724) protein is UPF0235 protein HD_0778.